The primary structure comprises 153 residues: Nucleoside diphosphate kinase (153 aa).

ATP is bound by residues K13, F61, R89, T95, R106, and N116. Residue H119 is the Pros-phosphohistidine intermediate of the active site.

This sequence belongs to the NDK family. The cofactor is Mg(2+). Highest levels in the liver and kidney with lower levels in the heart, brain and breast muscle.

Its subcellular location is the cytoplasm. It is found in the cell membrane. The enzyme catalyses a 2'-deoxyribonucleoside 5'-diphosphate + ATP = a 2'-deoxyribonucleoside 5'-triphosphate + ADP. The catalysed reaction is a ribonucleoside 5'-diphosphate + ATP = a ribonucleoside 5'-triphosphate + ADP. Major role in the synthesis of nucleoside triphosphates other than ATP. The ATP gamma phosphate is transferred to the NDP beta phosphate via a ping-pong mechanism, using a phosphorylated active-site intermediate. The polypeptide is Nucleoside diphosphate kinase (Columba livia (Rock dove)).